A 443-amino-acid chain; its full sequence is MSTTDSIVSSQAKQSSWRKSDTTWTLGLFGTAIGAGVLFFPIRAGFGGLIPILLMLVLAYPIAFYCHRALARLCLSGSNPSGNITETVEEHFGKTGGVVITFLYFFAICPLLWIYGVTITNTFMTFWENQLQMPALNRGFVALFLLLLMAFVIWFGKDLMVKVMSYLVWPFIASLVLISLSLIPYWNSAVIDQVDLSNIELTGHDGILVTVWLGISIMVFSFNFSPIVSSFVVSKREEHEKEFGREFTERKCSQIISRASMLMVAVVMFFAFSCLFTLSPQNMADAKAQNIPVLSYLANHFASLSGTKSTFATVLEYGASIIALVAIFKSFFGHYLGTLEGLNGLVLKFGYKGDKTKVSMGKLNTISMIFIMGSTWVVAYANPNILDLIEAMGAPIIASLLCLLPMYAIRKAPSLAKYRGRLDNVFVTLIGLLTILNIVYKLF.

The next 11 membrane-spanning stretches (helical) occupy residues 22–42 (TTWT…FFPI), 44–64 (AGFG…PIAF), 97–117 (GVVI…IYGV), 140–160 (FVAL…KDLM), 163–183 (VMSY…LSLI), 207–227 (ILVT…FSPI), 259–279 (ASML…FTLS), 319–339 (ASII…LGTL), 366–386 (ISMI…PNIL), 389–409 (IEAM…MYAI), and 423–443 (DNVF…YKLF).

The protein belongs to the amino acid/polyamine transporter 2 family. SdaC/TdcC subfamily.

The protein resides in the cell inner membrane. It carries out the reaction L-threonine(in) + H(+)(in) = L-threonine(out) + H(+)(out). It catalyses the reaction L-serine(in) + H(+)(in) = L-serine(out) + H(+)(out). In terms of biological role, involved in the import of threonine and serine into the cell, with the concomitant import of a proton (symport system). This Salmonella newport (strain SL254) protein is Threonine/serine transporter TdcC.